The following is a 251-amino-acid chain: MTEQKITFADQKRKTVEIAEFTEDGRYKRKVRSFVLRTGRLSEFQRNMMNNNWATLGLEYQTTAFDFTQIYGNTNPVILEIGFGMGKSLVEMALQNPDKNYLGIEVHTPGVGACIAYAVEKQVKNLRVICHDATEILQDCIADNSLAGLQLFFPDPWHKTKHHKRRIVQPHFVEKIQQKLVPNGFVHMATDWENYAEYMLEVLTSAVGLHNTSATNDYIPRPDFRPLTKFEQRGHKLGHGVWDLFFIKNIT.

S-adenosyl-L-methionine is bound by residues Glu80, Glu105, Asp132, and Asp155. The active site involves Asp155. Substrate-binding positions include Lys159, Asp191, and 228-231 (TKFE).

It belongs to the class I-like SAM-binding methyltransferase superfamily. TrmB family.

The catalysed reaction is guanosine(46) in tRNA + S-adenosyl-L-methionine = N(7)-methylguanosine(46) in tRNA + S-adenosyl-L-homocysteine. The protein operates within tRNA modification; N(7)-methylguanine-tRNA biosynthesis. In terms of biological role, catalyzes the formation of N(7)-methylguanine at position 46 (m7G46) in tRNA. The protein is tRNA (guanine-N(7)-)-methyltransferase of Histophilus somni (strain 2336) (Haemophilus somnus).